The following is a 210-amino-acid chain: Large ribosomal subunit protein uL3 (210 aa).

The protein belongs to the universal ribosomal protein uL3 family. As to quaternary structure, part of the 50S ribosomal subunit. Forms a cluster with proteins L14 and L19.

Its function is as follows. One of the primary rRNA binding proteins, it binds directly near the 3'-end of the 23S rRNA, where it nucleates assembly of the 50S subunit. The polypeptide is Large ribosomal subunit protein uL3 (Geobacter sulfurreducens (strain ATCC 51573 / DSM 12127 / PCA)).